Consider the following 550-residue polypeptide: Hydroxylamine reductase (550 aa).

[2Fe-2S] cluster is bound by residues Cys-3, Cys-6, Cys-18, and Cys-25. Residues His-249, Glu-273, Cys-317, Cys-405, Cys-433, Cys-458, Glu-492, and Lys-494 each coordinate hybrid [4Fe-2O-2S] cluster. Cys-405 carries the cysteine persulfide modification.

This sequence belongs to the HCP family. [2Fe-2S] cluster is required as a cofactor. The cofactor is hybrid [4Fe-2O-2S] cluster.

Its subcellular location is the cytoplasm. The catalysed reaction is A + NH4(+) + H2O = hydroxylamine + AH2 + H(+). In terms of biological role, catalyzes the reduction of hydroxylamine to form NH(3) and H(2)O. The sequence is that of Hydroxylamine reductase from Shigella flexneri serotype 5b (strain 8401).